The chain runs to 1762 residues: Kinase D-interacting substrate of 220 kDa (1762 aa).

Residues 1–508 (MSVLISQSVI…WLIVFLTLLL (508 aa)) are Cytoplasmic-facing. 11 ANK repeats span residues 45–74 (AAEQGNVEIVKELLKNGANCNLEDLDNWTA), 78–107 (ASKEGHIHIVEELLKSGASLEHRDMGGWTA), 111–140 (ACYKGRTDVVELLLSHGANPSVTGLYSVYP), 145–174 (AGRGHADIVHLLLQNGAKVNCSDKYGTTPL), 178–207 (ARKGHLECVKHLLAMGADVDQEGANSMTAL), 211–240 (VKGGYTQSVKEILKRNPNVNLTDKDGNTAL), 244–273 (SKEGHIEIVQDLLDAGTYVNIPDRSGDTVL), 277–306 (VRGGHVEIVRALLQKYADIDIRGQDNKTAL), 310–339 (VEKGNATMVRDILQCNPDTEICTKDGETPL), 343–372 (TKMRNIEVVELLLDKGAKVSAVDKKGDTPL), and 376–405 (IRGRSRRLAELLLRNPKDGRLLYRPNKAGE). One can recognise a KAP NTPase domain in the interval 440–953 (YDLYSSALAD…NIVSVTGRLL (514 aa)). The helical transmembrane segment at 509–529 (CGGLGLVFAFTVDTNLAIAIS) threads the bilayer. Residues 530–533 (LSFL) lie on the Extracellular side of the membrane. A helical membrane pass occupies residues 534–554 (ALIYIFFIVIYFGGRREGESW). Over 555–668 (NWAWALSTRL…SFVIFLFIVG (114 aa)) the chain is Cytoplasmic. Residues 669 to 689 (CIIAGITLLAIFRVDPKHLTV) traverse the membrane as a helical segment. The Extracellular segment spans residues 690–696 (NAILISI). Residues 697–717 (ASVVGLAFVLNCRTWWQVLDS) form a helical membrane-spanning segment. Residues 718–1680 (LLNSQRKRLH…TPSTVTLNNN (963 aa)) lie on the Cytoplasmic side of the membrane. Residues Ser-882 and Ser-885 each carry the phosphoserine modification. At Thr-914 the chain carries Phosphothreonine. The residue at position 918 (Ser-918) is a Phosphoserine; by PKD. The interval 1089–1092 (PRPP) is mediates interaction with CRKL. 7 positions are modified to phosphoserine: Ser-1163, Ser-1288, Ser-1344, Ser-1351, Ser-1353, Ser-1354, and Ser-1357. Disordered regions lie at residues 1279–1305 (DPRFLNENSSAPVPHGESARRSSHTEL), 1336–1358 (RHSNLSWQSQTRRTPSLSSLNSQ), 1390–1440 (EGGT…DGRK), and 1452–1556 (YSSS…EPIR). Residues 1338–1350 (SNLSWQSQTRRTP) are compositionally biased toward polar residues. Low complexity predominate over residues 1395 to 1422 (SSTISGRSSPHSTYYIGQSSSGGSIHST). Positions 1423-1440 (LEQERGKEGELKQEDGRK) are enriched in basic and acidic residues. Over residues 1452 to 1462 (YSSSGVSTNEA) the composition is skewed to polar residues. Residues Ser-1513, Ser-1518, Ser-1547, and Ser-1566 each carry the phosphoserine modification. The span at 1514–1524 (DEDESGTEESD) shows a compositional bias: acidic residues. Positions 1529 to 1553 (LKDDKDKKAEGKAERVCKSPEHSAE) are enriched in basic and acidic residues. The segment at 1571–1628 (DKKDSSDSGVRSNESSPNHSLHNEAADDSQLEKANLIELEDEGHSGKRGMPHSLSGLQ) is disordered. The segment covering 1579 to 1590 (GVRSNESSPNHS) has biased composition (polar residues). 2 positions are modified to phosphoserine: Ser-1615 and Ser-1625. At Thr-1671 the chain carries Phosphothreonine. A Phosphoserine modification is found at Ser-1673. At Thr-1676 the chain carries Phosphothreonine. Residues 1704-1762 (ILRPGPSPNPTAVQNENLKSMAHKRSQRSSYTRLSKDASELHAASSESTGFGEERESIL) are disordered. A PDZ-binding motif is present at residues 1757 to 1762 (ERESIL).

As to quaternary structure, found in a complex, at least composed of KIDINS220, MAGI2, NTRK1 and RAPGEF2; the complex is mainly formed at late endosomes in a nerve growth factor (NGF)-dependent manner. Interacts with RAPGEF2; the interaction is strengthened after NGF stimulation. Isoform 2 interacts (via C-terminal domain) with MAGI2 isoform 1 (via PDZ domain). Interacts with NTRK1, NTRK2, NTRK3, ERKL and NGFR. Can form a ternary complex with NGFR and NTRK1 and this complex is affected by the expression levels of KIDINS220/ARMS. An increase in KIDINS220/ARMS expression leads to a decreased association of NGFR and NTRK1. Interacts (via PDZ-binding motif) with SNTA1 and SNTB2 (via PDZ domains). Interacts with EPHA4 and PRKD1. Post-translationally, tyrosine phosphorylated by NTRK1, NTRK2, EPHB2 and EPHA4. Phosphorylation at Ser-918 is induced by phorbol ester treatment. Phosphorylation by NTRK2 is induced by brain-derived neurotrophic factor (BDNF) and neurotrophin-4/5. Phosphorylation by NTRK1 is induced by nerve growth factor (NGF). As to expression, expressed in developing nervous system and in highly plastic areas of the adult brain. Also expressed in neuroendocrine cells, where it concentrates at the tip of neurites. Expressed in developing muscle and is concentrated at the neuromuscular junction (NMS). SNTA1 can regulate its localization in the NMS.

It is found in the membrane. It localises to the late endosome. Functionally, promotes a prolonged MAP-kinase signaling by neurotrophins through activation of a Rap1-dependent mechanism. Provides a docking site for the CRKL-C3G complex, resulting in Rap1-dependent sustained ERK activation. May play an important role in regulating postsynaptic signal transduction through the syntrophin-mediated localization of receptor tyrosine kinases such as EPHA4. In cooperation with SNTA1 can enhance EPHA4-induced JAK/STAT activation. Plays a role in nerve growth factor (NGF)-induced recruitment of RAPGEF2 to late endosomes and neurite outgrowth. May play a role in neurotrophin- and ephrin-mediated neuronal outgrowth and in axon guidance during neural development and in neuronal regeneration. In Rattus norvegicus (Rat), this protein is Kinase D-interacting substrate of 220 kDa (Kidins220).